The chain runs to 189 residues: Elongation factor P 2 (189 aa).

The protein belongs to the elongation factor P family.

Its subcellular location is the cytoplasm. The protein operates within protein biosynthesis; polypeptide chain elongation. Involved in peptide bond synthesis. Stimulates efficient translation and peptide-bond synthesis on native or reconstituted 70S ribosomes in vitro. Probably functions indirectly by altering the affinity of the ribosome for aminoacyl-tRNA, thus increasing their reactivity as acceptors for peptidyl transferase. This Lactobacillus johnsonii (strain CNCM I-12250 / La1 / NCC 533) protein is Elongation factor P 2 (efp2).